A 66-amino-acid chain; its full sequence is Phylloseptin-H5 (66 aa).

The first 22 residues, 1-22, serve as a signal peptide directing secretion; that stretch reads MAFLKKSLFLVLFLGLVSLSIC. A propeptide spanning residues 23 to 44 is cleaved from the precursor; that stretch reads EEEKRETEEEENEQEDDDKSEE. The interval 24–44 is disordered; the sequence is EEKRETEEEENEQEDDDKSEE. Positions 30–41 are enriched in acidic residues; that stretch reads EEEENEQEDDDK. The residue at position 65 (phenylalanine 65) is a Phenylalanine amide.

As to expression, expressed by the skin glands.

Its subcellular location is the secreted. Has antibacterial activity against the Gram-negative bacteria E.coli and P.aeruginosa, and the Gram-positive bacterium S.aureus. No hemolytic activity. This chain is Phylloseptin-H5 (psn7), found in Pithecopus hypochondrialis (Orange-legged leaf frog).